A 194-amino-acid chain; its full sequence is Large ribosomal subunit protein bL9 (194 aa).

Over residues arginine 156–glutamine 167 the composition is skewed to basic and acidic residues. Positions arginine 156–glutamine 194 are disordered. The span at phenylalanine 181–glutamine 194 shows a compositional bias: acidic residues.

Belongs to the bacterial ribosomal protein bL9 family.

In terms of biological role, binds to the 23S rRNA. This is Large ribosomal subunit protein bL9 from Rhodopseudomonas palustris (strain BisB5).